The following is a 277-amino-acid chain: MGIKVYKPTTNGRRNMTSLDFAEITTSTPEKSLLVSLKSKAGRNNNGRITVRHQGGGHKRHYRLIDFKRNKDGVEAVVKTIEYDPNRTANIALVHYTDGVKAYIIAPKGLEVGQRIVSGPDADIKVGNALPLANIPVGTVVHNIELKPGKGGELVRAAGASAQVLGQEGKYVLVRLQSGEVRMILGTCRATIGTVGNEQQSLVNIGKAGRSRWKGIRPTVRGSVMNPNDHPHGGGEGKAPVGRKAPSTPWGKPALGLKTRNKKAKSDKLIVRRRNEK.

The segment at threonine 219–lysine 277 is disordered. The span at alanine 264–lysine 277 shows a compositional bias: basic and acidic residues.

It belongs to the universal ribosomal protein uL2 family. In terms of assembly, part of the 50S ribosomal subunit. Forms a bridge to the 30S subunit in the 70S ribosome.

In terms of biological role, one of the primary rRNA binding proteins. Required for association of the 30S and 50S subunits to form the 70S ribosome, for tRNA binding and peptide bond formation. It has been suggested to have peptidyltransferase activity; this is somewhat controversial. Makes several contacts with the 16S rRNA in the 70S ribosome. The chain is Large ribosomal subunit protein uL2 from Streptococcus pyogenes serotype M1.